Consider the following 403-residue polypeptide: CCA-adding enzyme (403 aa).

ATP contacts are provided by glycine 32 and arginine 35. Residues glycine 32 and arginine 35 each coordinate CTP. Positions 45 and 47 each coordinate Mg(2+). 5 residues coordinate ATP: arginine 116, aspartate 159, arginine 162, arginine 165, and arginine 168. Arginine 116, aspartate 159, arginine 162, arginine 165, and arginine 168 together coordinate CTP.

This sequence belongs to the tRNA nucleotidyltransferase/poly(A) polymerase family. Bacterial CCA-adding enzyme type 3 subfamily. In terms of assembly, homodimer. It depends on Mg(2+) as a cofactor.

It catalyses the reaction a tRNA precursor + 2 CTP + ATP = a tRNA with a 3' CCA end + 3 diphosphate. The enzyme catalyses a tRNA with a 3' CCA end + 2 CTP + ATP = a tRNA with a 3' CCACCA end + 3 diphosphate. Functionally, catalyzes the addition and repair of the essential 3'-terminal CCA sequence in tRNAs without using a nucleic acid template. Adds these three nucleotides in the order of C, C, and A to the tRNA nucleotide-73, using CTP and ATP as substrates and producing inorganic pyrophosphate. tRNA 3'-terminal CCA addition is required both for tRNA processing and repair. Also involved in tRNA surveillance by mediating tandem CCA addition to generate a CCACCA at the 3' terminus of unstable tRNAs. While stable tRNAs receive only 3'-terminal CCA, unstable tRNAs are marked with CCACCA and rapidly degraded. In Streptococcus suis (strain 98HAH33), this protein is CCA-adding enzyme.